Consider the following 296-residue polypeptide: MNKKDIATPTRTRALLDKYQFDFKKSLGQNFLIDVNIIQKIIDASNIDERTGVIEVGPGMGSLTEQLAKHAKKVVAFEIDQRLIPVLEDTLSDYDNVTVINEDILKADVVEAVQTHLSDCDKIMVVANLPYYITTPILLNLMSKSLPIDGYVVMMQKEVGERLNAEIGTKAYGSLSIVAQYYTETSKVLTVPKTVFMPPPNVDSIVVKLMKRQAPIVAVDDEDQFFKMTKAAFSQRRKTIANNYQSLFFDGKQKKYIIKTWLEDGGIDPRRRGETLSIKEFANLFNNLKKFPELEF.

S-adenosyl-L-methionine contacts are provided by N30, L32, G57, E78, D103, and N128.

This sequence belongs to the class I-like SAM-binding methyltransferase superfamily. rRNA adenine N(6)-methyltransferase family. RsmA subfamily.

The protein resides in the cytoplasm. It catalyses the reaction adenosine(1518)/adenosine(1519) in 16S rRNA + 4 S-adenosyl-L-methionine = N(6)-dimethyladenosine(1518)/N(6)-dimethyladenosine(1519) in 16S rRNA + 4 S-adenosyl-L-homocysteine + 4 H(+). Its function is as follows. Specifically dimethylates two adjacent adenosines (A1518 and A1519) in the loop of a conserved hairpin near the 3'-end of 16S rRNA in the 30S particle. May play a critical role in biogenesis of 30S subunits. This chain is Ribosomal RNA small subunit methyltransferase A, found in Staphylococcus carnosus (strain TM300).